Here is a 342-residue protein sequence, read N- to C-terminus: 11-beta-hydroxysteroid dehydrogenase-like 6 (342 aa).

A helical; Signal-anchor for type II membrane protein membrane pass occupies residues 10 to 30 (FLFPLLTLYALLVFYPTYQRL). Residues 54–80 (GAASGIGEALAYEYGKRGAYLALVDIR) and Asp105 contribute to the NADP(+) site. Ser184 contacts substrate. The active-site Proton acceptor is the Tyr197. Residues 197–201 (YCASK) and Lys201 contribute to the NADP(+) site.

The protein belongs to the short-chain dehydrogenases/reductases (SDR) family.

It localises to the membrane. This Arabidopsis thaliana (Mouse-ear cress) protein is 11-beta-hydroxysteroid dehydrogenase-like 6 (HSD6).